The primary structure comprises 258 residues: Small ribosomal subunit protein uS2 (258 aa).

The protein belongs to the universal ribosomal protein uS2 family.

The chain is Small ribosomal subunit protein uS2 from Streptococcus suis (strain 05ZYH33).